The sequence spans 271 residues: MADEVVGQEYQGNPGAFSPQQARQIFRAGTVAHTSGYSRGYAQANLITLPQEQAFDFLLFAQRNPKPCPLLGVLEAGQVSSELLADGDIRSDIPLYRVYRKGQLDSEVPDVRDVWREDLVSFIIGCSFTFETALLDNGVPVEHIAQGKNVPMYRTSIPTNSAGAFSGPMVVSMRPIPAAQVADAVRITSRYPAVHGAPVHVGDPAAIGIQDLNNPDFGEAVDIPAGTIPVFWACGVTPQSVVMESKPEFAICHAPGHMLITDARDLQYQVP.

Belongs to the D-glutamate cyclase family.

This chain is Putative hydro-lyase jk0403, found in Corynebacterium jeikeium (strain K411).